Consider the following 422-residue polypeptide: 4-hydroxy-3-methylbut-2-en-1-yl diphosphate synthase (flavodoxin) (422 aa).

Residues cysteine 316, cysteine 319, cysteine 362, and glutamate 369 each contribute to the [4Fe-4S] cluster site.

It belongs to the IspG family. It depends on [4Fe-4S] cluster as a cofactor.

The enzyme catalyses (2E)-4-hydroxy-3-methylbut-2-enyl diphosphate + oxidized [flavodoxin] + H2O + 2 H(+) = 2-C-methyl-D-erythritol 2,4-cyclic diphosphate + reduced [flavodoxin]. Its pathway is isoprenoid biosynthesis; isopentenyl diphosphate biosynthesis via DXP pathway; isopentenyl diphosphate from 1-deoxy-D-xylulose 5-phosphate: step 5/6. Its function is as follows. Converts 2C-methyl-D-erythritol 2,4-cyclodiphosphate (ME-2,4cPP) into 1-hydroxy-2-methyl-2-(E)-butenyl 4-diphosphate. The protein is 4-hydroxy-3-methylbut-2-en-1-yl diphosphate synthase (flavodoxin) of Ehrlichia ruminantium (strain Gardel).